A 466-amino-acid chain; its full sequence is Uronate isomerase (466 aa).

Belongs to the metallo-dependent hydrolases superfamily. Uronate isomerase family.

It carries out the reaction D-glucuronate = D-fructuronate. The enzyme catalyses aldehydo-D-galacturonate = keto-D-tagaturonate. It functions in the pathway carbohydrate metabolism; pentose and glucuronate interconversion. The polypeptide is Uronate isomerase (Brucella suis (strain ATCC 23445 / NCTC 10510)).